A 66-amino-acid chain; its full sequence is Alpha-conotoxin-like Tx2 (66 aa).

The N-terminal stretch at Met1 to Ser21 is a signal peptide. The propeptide occupies Phe22 to Pro49. 2 disulfide bridges follow: Cys51-Cys57 and Cys52-Cys65. The ser-Xaa-Pro motif, crucial for potent interaction with nAChR stretch occupies residues Ser53–Pro55.

This sequence belongs to the conotoxin A superfamily. As to expression, expressed by the venom duct.

It is found in the secreted. Functionally, alpha-conotoxins act on postsynaptic membranes, they bind to the nicotinic acetylcholine receptors (nAChR) and thus inhibit them. The sequence is that of Alpha-conotoxin-like Tx2 from Conus textile (Cloth-of-gold cone).